Here is a 171-residue protein sequence, read N- to C-terminus: CS1 fimbrial subunit A (171 aa).

Positions 1–23 are cleaved as a signal peptide; sequence MKLKKTIGAMALATLFATMGASA.

Belongs to the fimbrial CS1 protein family.

The protein resides in the fimbrium. In terms of biological role, fimbriae (also called pili), polar filaments radiating from the surface of the bacterium to a length of 0.5-1.5 micrometers and numbering 100-300 per cell, enable bacteria to colonize the epithelium of specific host organs. The chain is CS1 fimbrial subunit A (csoA) from Escherichia coli.